Here is a 277-residue protein sequence, read N- to C-terminus: 4-hydroxy-tetrahydrodipicolinate reductase (277 aa).

NAD(+) contacts are provided by residues 10–15 (GAGGRM) and glutamate 36. Residue arginine 37 coordinates NADP(+). Residues 100–102 (GTT) and 124–127 (SGNM) each bind NAD(+). Histidine 158 serves as the catalytic Proton donor/acceptor. Histidine 159 is a (S)-2,3,4,5-tetrahydrodipicolinate binding site. Lysine 162 serves as the catalytic Proton donor. 168 to 169 (GT) contributes to the (S)-2,3,4,5-tetrahydrodipicolinate binding site.

It belongs to the DapB family.

Its subcellular location is the cytoplasm. The catalysed reaction is (S)-2,3,4,5-tetrahydrodipicolinate + NAD(+) + H2O = (2S,4S)-4-hydroxy-2,3,4,5-tetrahydrodipicolinate + NADH + H(+). It carries out the reaction (S)-2,3,4,5-tetrahydrodipicolinate + NADP(+) + H2O = (2S,4S)-4-hydroxy-2,3,4,5-tetrahydrodipicolinate + NADPH + H(+). Its pathway is amino-acid biosynthesis; L-lysine biosynthesis via DAP pathway; (S)-tetrahydrodipicolinate from L-aspartate: step 4/4. Catalyzes the conversion of 4-hydroxy-tetrahydrodipicolinate (HTPA) to tetrahydrodipicolinate. In Chelativorans sp. (strain BNC1), this protein is 4-hydroxy-tetrahydrodipicolinate reductase.